Consider the following 244-residue polypeptide: Purine nucleoside phosphorylase HI_0175 (244 aa).

Residues His70, Cys105, and His122 each coordinate Zn(2+).

Belongs to the purine nucleoside phosphorylase YfiH/LACC1 family. Homodimer. Requires Cu(2+) as cofactor. It depends on Zn(2+) as a cofactor.

It catalyses the reaction adenosine + phosphate = alpha-D-ribose 1-phosphate + adenine. It carries out the reaction S-methyl-5'-thioadenosine + phosphate = 5-(methylsulfanyl)-alpha-D-ribose 1-phosphate + adenine. The catalysed reaction is inosine + phosphate = alpha-D-ribose 1-phosphate + hypoxanthine. The enzyme catalyses adenosine + H2O + H(+) = inosine + NH4(+). Functionally, purine nucleoside enzyme that catalyzes the phosphorolysis of adenosine and inosine nucleosides, yielding D-ribose 1-phosphate and the respective free bases, adenine and hypoxanthine. Also catalyzes the phosphorolysis of S-methyl-5'-thioadenosine into adenine and S-methyl-5-thio-alpha-D-ribose 1-phosphate. Also has adenosine deaminase activity. The protein is Purine nucleoside phosphorylase HI_0175 of Haemophilus influenzae (strain ATCC 51907 / DSM 11121 / KW20 / Rd).